Reading from the N-terminus, the 254-residue chain is 23S rRNA (guanosine-2'-O-)-methyltransferase RlmB (254 aa).

Glycine 198, isoleucine 218, and leucine 227 together coordinate S-adenosyl-L-methionine.

Belongs to the class IV-like SAM-binding methyltransferase superfamily. RNA methyltransferase TrmH family. RlmB subfamily. As to quaternary structure, homodimer.

It is found in the cytoplasm. The catalysed reaction is guanosine(2251) in 23S rRNA + S-adenosyl-L-methionine = 2'-O-methylguanosine(2251) in 23S rRNA + S-adenosyl-L-homocysteine + H(+). In terms of biological role, specifically methylates the ribose of guanosine 2251 in 23S rRNA. This is 23S rRNA (guanosine-2'-O-)-methyltransferase RlmB from Blochmanniella floridana.